The chain runs to 264 residues: Large ribosomal subunit protein uL2 (264 aa).

The protein belongs to the universal ribosomal protein uL2 family.

It localises to the cytoplasm. The polypeptide is Large ribosomal subunit protein uL2 (RPL8) (Tetrahymena thermophila (strain SB210)).